Reading from the N-terminus, the 388-residue chain is Formate-dependent phosphoribosylglycinamide formyltransferase (388 aa).

Residues 15 to 16 and Glu-75 contribute to the N(1)-(5-phospho-beta-D-ribosyl)glycinamide site; that span reads EL. ATP contacts are provided by residues Arg-107, Lys-148, 153–158, 188–191, and Glu-196; these read SSGKGQ and EEFL. Residues 112-302 enclose the ATP-grasp domain; the sequence is DLAAGELALR…EFELHLRAVL (191 aa). Residues Glu-261 and Glu-273 each coordinate Mg(2+). N(1)-(5-phospho-beta-D-ribosyl)glycinamide-binding positions include Asp-280, Lys-350, and 357–358; that span reads RR.

Belongs to the PurK/PurT family. As to quaternary structure, homodimer.

It catalyses the reaction N(1)-(5-phospho-beta-D-ribosyl)glycinamide + formate + ATP = N(2)-formyl-N(1)-(5-phospho-beta-D-ribosyl)glycinamide + ADP + phosphate + H(+). Its pathway is purine metabolism; IMP biosynthesis via de novo pathway; N(2)-formyl-N(1)-(5-phospho-D-ribosyl)glycinamide from N(1)-(5-phospho-D-ribosyl)glycinamide (formate route): step 1/1. Its function is as follows. Involved in the de novo purine biosynthesis. Catalyzes the transfer of formate to 5-phospho-ribosyl-glycinamide (GAR), producing 5-phospho-ribosyl-N-formylglycinamide (FGAR). Formate is provided by PurU via hydrolysis of 10-formyl-tetrahydrofolate. This Parasynechococcus marenigrum (strain WH8102) protein is Formate-dependent phosphoribosylglycinamide formyltransferase.